We begin with the raw amino-acid sequence, 336 residues long: dTDP-glucose 4,6-dehydratase (336 aa).

Residues 7–13 (GGAGFIG), 37–40 (DKLT), and 63–64 (DI) each bind NAD(+). Thr-87 is a binding site for substrate. Thr-102 contacts NAD(+). Position 127 to 129 (127 to 129 (TDE)) interacts with substrate. The active-site Proton donor is Asp-128. Catalysis depends on proton acceptor residues Glu-129 and Tyr-151. 151 to 155 (YAAAK) is a binding site for NAD(+). Asn-180 serves as a coordination point for substrate. Asn-181 is a binding site for NAD(+). Substrate contacts are provided by residues 190–191 (KL), 206–208 (PVY), Arg-215, Asn-250, and 274–277 (RPGH).

Belongs to the NAD(P)-dependent epimerase/dehydratase family. dTDP-glucose dehydratase subfamily. In terms of assembly, homodimer. Requires NAD(+) as cofactor.

It catalyses the reaction dTDP-alpha-D-glucose = dTDP-4-dehydro-6-deoxy-alpha-D-glucose + H2O. It participates in antibiotic biosynthesis; novobiocin biosynthesis. Functionally, dTDP-glucose 4,6-dehydratase involved in the generation of the deoxysugar in the novobiocin biosynthesis pathway, an aminocoumarin family antibiotic that targets bacterial DNA gyrases. This is dTDP-glucose 4,6-dehydratase (novT) from Streptomyces niveus (Streptomyces spheroides).